The sequence spans 521 residues: GMP synthase [glutamine-hydrolyzing] (521 aa).

Residues K5–D203 form the Glutamine amidotransferase type-1 domain. The active-site Nucleophile is the C82. Active-site residues include H177 and E179. A GMPS ATP-PPase domain is found at W204–R396. Position 231-237 (S231–S237) interacts with ATP.

In terms of assembly, homodimer.

It catalyses the reaction XMP + L-glutamine + ATP + H2O = GMP + L-glutamate + AMP + diphosphate + 2 H(+). The protein operates within purine metabolism; GMP biosynthesis; GMP from XMP (L-Gln route): step 1/1. Catalyzes the synthesis of GMP from XMP. This Azoarcus sp. (strain BH72) protein is GMP synthase [glutamine-hydrolyzing].